Reading from the N-terminus, the 500-residue chain is Centrosomal protein of 57 kDa (500 aa).

The segment covering M1 to S16 has biased composition (low complexity). The disordered stretch occupies residues M1 to F59. Over residues S22–P35 the composition is skewed to polar residues. S53 carries the post-translational modification Phosphoserine. Residues T58–E239 form a centrosome localization domain (CLD) region. A coiled-coil region spans residues E63 to R242. Disordered regions lie at residues S256–T275 and Q432–L478. The mediates interaction with microtubules stretch occupies residues G278–L491. Residues T389 to S449 are a coiled coil. Basic and acidic residues-rich tracts occupy residues Q432 to D444 and S461 to R475.

The protein belongs to the translokin family. As to quaternary structure, interacts with FGF2 and RAP80. Does not interact with FGF1 or FGF2 isoform 24 kDa. Homodimer and homooligomer. Interacts with microtubules. As to expression, ubiquitous (at protein level). Expressed in testis, predominantly in round spermatids. Low expression is detected in other tissues.

The protein localises to the nucleus. It is found in the cytoplasm. Its subcellular location is the cytoskeleton. The protein resides in the microtubule organizing center. It localises to the centrosome. In terms of biological role, centrosomal protein which may be required for microtubule attachment to centrosomes. May act by forming ring-like structures around microtubules. Mediates nuclear translocation and mitogenic activity of the internalized growth factor FGF2. The sequence is that of Centrosomal protein of 57 kDa (Cep57) from Mus musculus (Mouse).